The primary structure comprises 372 residues: Heterogeneous nuclear rnp K-like protein 2 (372 aa).

Polar residues predominate over residues 1-23 (MSDINDPNSISLPVGSSCTSRGA). The disordered stretch occupies residues 1-49 (MSDINDPNSISLPVGSSCTSRGASTETFTTSRSTTLFSSQQESKDEGNV). The segment covering 24-39 (STETFTTSRSTTLFSS) has biased composition (low complexity). 3 KH domains span residues 59–123 (TINH…LGQI), 167–232 (IGTS…LLQI), and 283–354 (EFKA…ESML).

The protein belongs to the HEK2 family. Binds RNA.

It localises to the cytoplasm. Its subcellular location is the P-body. It is found in the nucleus. The protein resides in the chromosome. The protein localises to the telomere. RNA-binding protein involved in the correct localization of transcripts in the cell. RNA localization is a widespread mechanism for achieving localized protein synthesis. Involved in structural and functional organization of telomeric chromatin and regulates silencing at the HMR locus. In Zygosaccharomyces rouxii (strain ATCC 2623 / CBS 732 / NBRC 1130 / NCYC 568 / NRRL Y-229), this protein is Heterogeneous nuclear rnp K-like protein 2 (HEK2).